A 147-amino-acid chain; its full sequence is Hemoglobin subunit epsilon (147 aa).

Positions 3 to 147 (HFTAEEKAAI…VAIALGHKYH (145 aa)) constitute a Globin domain. Phosphoserine occurs at positions 14 and 51. H64 and H93 together coordinate heme b.

Belongs to the globin family. In terms of assembly, heterotetramer of two alpha chains and two epsilon chains in early embryonic hemoglobin Gower-2; two zeta chains and two epsilon chains in early embryonic hemoglobin Gower-1. As to expression, red blood cells.

Its function is as follows. The epsilon chain is a beta-type chain of early mammalian embryonic hemoglobin. The chain is Hemoglobin subunit epsilon (HBE1) from Pithecia irrorata (Gray monk saki).